The sequence spans 41 residues: Photosystem II reaction center protein X (41 aa).

Over 2-6 the chain is Lumenal; it reads TITPS. The helical transmembrane segment at 7 to 29 threads the bilayer; it reads LKGFFIGLLSGAVVLGLTFAVLI. The Cytoplasmic portion of the chain corresponds to 30–41; sequence AISQIDKVQRSL.

The protein belongs to the PsbX family. Type 1 subfamily. As to quaternary structure, PSII is composed of 1 copy each of membrane proteins PsbA, PsbB, PsbC, PsbD, PsbE, PsbF, PsbH, PsbI, PsbJ, PsbK, PsbL, PsbM, PsbT, PsbX, PsbY, PsbZ, Psb30/Ycf12, peripheral proteins PsbO, CyanoQ (PsbQ), PsbU, PsbV and a large number of cofactors. It forms dimeric complexes. Part of a photosystem II (PSII) assembly intermediate complex PSII-I; crystallized from a strain deleted of psbJ, it forms monomeric PSII before addition of the oxygen evolving complex. PSII-I includes 3 assembly factors not found in mature PSII (Psb27, Psb28 and Psb34). PSII binds multiple chlorophylls, carotenoids and specific lipids. is required as a cofactor.

It is found in the cellular thylakoid membrane. Its function is as follows. Involved in the binding and/or turnover of quinones at the Q(B) site of photosystem II (PSII). PSII is a light-driven water plastoquinone oxidoreductase, using light energy to abstract electrons from H(2)O, generating a proton gradient subsequently used for ATP formation. The protein is Photosystem II reaction center protein X of Thermosynechococcus vestitus (strain NIES-2133 / IAM M-273 / BP-1).